We begin with the raw amino-acid sequence, 717 residues long: Polyribonucleotide nucleotidyltransferase (717 aa).

Mg(2+)-binding residues include Asp488 and Asp494. Residues 555–614 enclose the KH domain; it reads PRIEVMNIPVDKIREVIGSGGKVIREIVEKTGAKINIDDDGTVKIASASAKEIEAARKWI. The S1 motif domain occupies 624–692; that stretch reads GQVYEGTVVK…ERGKVRLSMK (69 aa).

The protein belongs to the polyribonucleotide nucleotidyltransferase family. Mg(2+) serves as cofactor.

It is found in the cytoplasm. It carries out the reaction RNA(n+1) + phosphate = RNA(n) + a ribonucleoside 5'-diphosphate. Functionally, involved in mRNA degradation. Catalyzes the phosphorolysis of single-stranded polyribonucleotides processively in the 3'- to 5'-direction. This chain is Polyribonucleotide nucleotidyltransferase, found in Rhizobium meliloti (strain 1021) (Ensifer meliloti).